Here is a 305-residue protein sequence, read N- to C-terminus: Homoserine kinase (305 aa).

95–105 (PHGRGLGSSSA) contributes to the ATP binding site.

Belongs to the GHMP kinase family. Homoserine kinase subfamily.

It is found in the cytoplasm. It carries out the reaction L-homoserine + ATP = O-phospho-L-homoserine + ADP + H(+). It functions in the pathway amino-acid biosynthesis; L-threonine biosynthesis; L-threonine from L-aspartate: step 4/5. Functionally, catalyzes the ATP-dependent phosphorylation of L-homoserine to L-homoserine phosphate. This Streptomyces avermitilis (strain ATCC 31267 / DSM 46492 / JCM 5070 / NBRC 14893 / NCIMB 12804 / NRRL 8165 / MA-4680) protein is Homoserine kinase.